Here is a 232-residue protein sequence, read N- to C-terminus: MKVLAIKLVDYREWTERLGYDREWLIQKIQNKFMMKIHEIASQYSTFPLQLRFDNFLMIVDGITNTQLIYMINDMQENLPVGIKTCLGYGKTPLEAQWNASVCLNNKEDKFKEYVDEKIAALHFDINFNTEALKYTSLYDSFLEITNIYVDLSRFLYKIGGILQYLGGDNYLGFVSTNSVNKVIEKFSDDNKIKVGIGIGQNARTAIKLATTSLEKIRNNREKTWHIEEEYH.

Belongs to the archaeal-type GTP cyclohydrolase family.

It catalyses the reaction GTP + 3 H2O = 2-amino-5-formylamino-6-(5-phospho-D-ribosylamino)pyrimidin-4(3H)-one + 2 phosphate + 2 H(+). Catalyzes the formation of 2-amino-5-formylamino-6-ribofuranosylamino-4(3H)-pyrimidinone ribonucleotide monophosphate and inorganic phosphate from GTP. Also has an independent pyrophosphate phosphohydrolase activity. This is GTP cyclohydrolase III from Saccharolobus islandicus (strain Y.G.57.14 / Yellowstone #1) (Sulfolobus islandicus).